We begin with the raw amino-acid sequence, 43 residues long: Potassium channel toxin gamma-KTx 4.11 (43 aa).

Cystine bridges form between Cys-5-Cys-23, Cys-11-Cys-34, Cys-20-Cys-39, and Cys-24-Cys-41.

It belongs to the ergtoxin family. Gamma-KTx 4 subfamily. As to expression, expressed by the venom gland.

The protein localises to the secreted. In terms of biological role, reversibly blocks Kv11/ERG potassium channels. The protein is Potassium channel toxin gamma-KTx 4.11 of Centruroides noxius (Mexican scorpion).